The chain runs to 436 residues: GTPase Obg (436 aa).

Residues 1–159 (MAFVDQATIE…LKVKLELRVL (159 aa)) enclose the Obg domain. An OBG-type G domain is found at 160–335 (ADVGLVGFPS…LLLKVADLLD (176 aa)). Residues 166-173 (GFPSAGKS), 191-195 (FTTID), 213-216 (DLPG), 285-288 (TKMD), and 316-318 (SSV) each bind GTP. Positions 173 and 193 each coordinate Mg(2+). The 80-residue stretch at 357–436 (KDDHQSTDFQ…GADFAFEFEE (80 aa)) folds into the OCT domain.

Belongs to the TRAFAC class OBG-HflX-like GTPase superfamily. OBG GTPase family. As to quaternary structure, monomer. It depends on Mg(2+) as a cofactor.

The protein resides in the cytoplasm. An essential GTPase which binds GTP, GDP and possibly (p)ppGpp with moderate affinity, with high nucleotide exchange rates and a fairly low GTP hydrolysis rate. Plays a role in control of the cell cycle, stress response, ribosome biogenesis and in those bacteria that undergo differentiation, in morphogenesis control. The chain is GTPase Obg from Oenococcus oeni (strain ATCC BAA-331 / PSU-1).